The sequence spans 89 residues: Defensin-like protein 78 (89 aa).

The first 30 residues, 1 to 30 (MANNMVASPYKNTFMMIALVLILLISGSEA), serve as a signal peptide directing secretion. Disulfide bonds link Cys40-Cys75, Cys44-Cys67, Cys52-Cys73, and Cys56-Cys74.

It belongs to the DEFL family.

It localises to the secreted. In Arabidopsis thaliana (Mouse-ear cress), this protein is Defensin-like protein 78.